We begin with the raw amino-acid sequence, 328 residues long: Gonadotropin-releasing hormone receptor (328 aa).

The Extracellular portion of the chain corresponds to 1 to 38; that stretch reads MANRAYLEQKQTQCSIINSSFSMTHRDLPTLTLSGKIR. The N-linked (GlcNAc...) asparagine glycan is linked to asparagine 18. A helical transmembrane segment spans residues 39 to 58; sequence VMVTFFLFLVSTAFNASFLM. Over 59–77 the chain is Cytoplasmic; that stretch reads KLQRQTQKKEEVKKLTRMK. Residues 78–97 form a helical membrane-spanning segment; that stretch reads VLLKHLTLANLLETVIVMPL. The Extracellular segment spans residues 98–115; the sequence is DGIWNVTVQWYAGEFLCK. The N-linked (GlcNAc...) asparagine glycan is linked to asparagine 102. Cysteine 114 and cysteine 196 form a disulfide bridge. The helical transmembrane segment at 116–137 threads the bilayer; it reads ALSYLKLFSMYAPAFMMVVISL. Residues 138-164 are Cytoplasmic-facing; the sequence is DRFLAITRPLAVKSNTKVGQSLIAVAW. A helical transmembrane segment spans residues 165 to 184; that stretch reads FLSIVLAGPQLYIFRMIYVE. Residues 185 to 212 are Extracellular-facing; that stretch reads DISGQTGNFSQCVTHCSFPEWWQEAFYN. The N-linked (GlcNAc...) asparagine glycan is linked to asparagine 192. A helical membrane pass occupies residues 213–232; it reads LLTFSCLFIGPLLIMLVCNA. Residues 233–281 lie on the Cytoplasmic side of the membrane; it reads KIIFTLTQVLHQDPHELQLNRSKNNIPRARLRTLKMTVAFATLFTICWT. A helical membrane pass occupies residues 282–300; it reads PYYVLGIWYWFDPEMLNRV. At 301-306 the chain is on the extracellular side; that stretch reads SDPVNH. The chain crosses the membrane as a helical span at residues 307-326; that stretch reads FFFLFGLLNPCFDPLIYGYF. Over 327–328 the chain is Cytoplasmic; that stretch reads SL.

Belongs to the G-protein coupled receptor 1 family.

The protein resides in the cell membrane. Its function is as follows. Receptor for gonadotropin releasing hormone (GnRH) that mediates the action of GnRH to stimulate the secretion of the gonadotropic hormones luteinizing hormone (LH) and follicle-stimulating hormone (FSH). This receptor mediates its action by association with G-proteins that activate a phosphatidylinositol-calcium second messenger system. The protein is Gonadotropin-releasing hormone receptor (GNRHR) of Trichosurus vulpecula (Brush-tailed possum).